The sequence spans 301 residues: MEIRRRPPNPSVKVAHLQYAIPHADAEPRHILEKIVWEKDREVETARQRVPLETLKSQIADLPIPRDFIAALRQASRAPAVIAEVKKASPSQGVIRADFDPVLIANAYAEGGASCLSVLTDKSFFQGGFEVLVEVRQTVGLPLLCKDFILTPYQLYQARAAGADAALLIVAILSDQDLTYLSKVANSLGLNVLVEVHDAEELERVLNLGGFPLIGINNRDLTTFETDLETTETLSQQFATRLQQQGVLLVSESGLFNRADLDRVQAVGAEAVLVGEALMRQSDVCAGLQQLMIGDEGTSNS.

The protein belongs to the TrpC family.

The catalysed reaction is 1-(2-carboxyphenylamino)-1-deoxy-D-ribulose 5-phosphate + H(+) = (1S,2R)-1-C-(indol-3-yl)glycerol 3-phosphate + CO2 + H2O. The protein operates within amino-acid biosynthesis; L-tryptophan biosynthesis; L-tryptophan from chorismate: step 4/5. This Prochlorococcus marinus (strain MIT 9313) protein is Indole-3-glycerol phosphate synthase.